The chain runs to 754 residues: FAD-dependent monooxygenase ntnA (754 aa).

Residues 3–23 (IPFKVLIIGGGVAGLTLAIML) traverse the membrane as a helical segment. The FAD site is built by glutamate 34, glycine 48, and arginine 109. Tyrosine 218 is an active-site residue. The FAD site is built by aspartate 311 and alanine 324. Helical transmembrane passes span 446-466 (PLAT…PWLA), 486-506 (AEVL…MWVI), 536-556 (ILPI…YYYM), and 563-583 (LGVA…SAVC). Residue asparagine 586 is glycosylated (N-linked (GlcNAc...) asparagine). Residues 595–615 (SWWFTADFAFPVVAYLSGMFL) form a helical membrane-spanning segment. An N-linked (GlcNAc...) asparagine glycan is attached at asparagine 616. A run of 2 helical transmembrane segments spans residues 644-664 (IAFV…TTIL) and 679-697 (LASL…AWEL). Asparagine 701 is a glycosylation site (N-linked (GlcNAc...) asparagine). A helical membrane pass occupies residues 712 to 732 (LTILSSTIFGGPAATLAGTFI).

This sequence belongs to the paxM FAD-dependent monooxygenase family. Requires FAD as cofactor.

Its subcellular location is the membrane. Its pathway is secondary metabolite biosynthesis; terpenoid biosynthesis. FAD-dependent monooxygenase; part of the gene cluster that mediates the biosynthesis of the meroterpenoids nectripenoids A and B, as well as cochliquninone D and isocochliquninone E. The pathway probably begins with the HR-PKS ntnH that catalyzes two chain-extension steps to form a reduced triketide, which then primes the SAT domain in the NR-PKS ntnG to initiate three more cycles of extension to give a linear hexaketide corresponding to the polyketide part of nectripenoids. The FAD-dependent monooxygenase ntnJ then performs an oxidative decarboxylation at C11 of the ntnH/ntnG product, via an electrophilic aromatic hydroxylation with concomitant ipso-decarboxylation. The membrane-bound polyprenyl transferase ntnF then introduces a farnesyl group before the FAD-dependent monooxygenase ntnK functions as the first epoxidase on terminal C12'-C13' olefin, followed by a second epoxidation on C7'-C8' catalyzed by ntnA. The terpene cyclase/mutase ntnI then initiates the sequential tricyclic ring formation through protonation of the terminal epoxide and catalyzes the regioselective and stereoselective 6/6/6-tricyclic ring formation. The cytochrome P450 monooxygenase ntnM may then hydroxylate C1'. The chain is FAD-dependent monooxygenase ntnA from Nectria sp.